The primary structure comprises 137 residues: NADH-quinone oxidoreductase subunit A 1 (137 aa).

Helical transmembrane passes span Phe-14 to Leu-34, Phe-66 to Trp-86, and Trp-95 to Leu-115.

The protein belongs to the complex I subunit 3 family. In terms of assembly, NDH-1 is composed of 13 different subunits. Subunits NuoA, H, J, K, L, M, N constitute the membrane sector of the complex.

It localises to the cell inner membrane. It carries out the reaction a quinone + NADH + 5 H(+)(in) = a quinol + NAD(+) + 4 H(+)(out). In terms of biological role, NDH-1 shuttles electrons from NADH, via FMN and iron-sulfur (Fe-S) centers, to quinones in the respiratory chain. The immediate electron acceptor for the enzyme in this species is believed to be ubiquinone. Couples the redox reaction to proton translocation (for every two electrons transferred, four hydrogen ions are translocated across the cytoplasmic membrane), and thus conserves the redox energy in a proton gradient. The protein is NADH-quinone oxidoreductase subunit A 1 of Pseudomonas paraeruginosa (strain DSM 24068 / PA7) (Pseudomonas aeruginosa (strain PA7)).